A 253-amino-acid polypeptide reads, in one-letter code: 5-oxoprolinase subunit A (253 aa).

The protein belongs to the LamB/PxpA family. In terms of assembly, forms a complex composed of PxpA, PxpB and PxpC.

The catalysed reaction is 5-oxo-L-proline + ATP + 2 H2O = L-glutamate + ADP + phosphate + H(+). Functionally, catalyzes the cleavage of 5-oxoproline to form L-glutamate coupled to the hydrolysis of ATP to ADP and inorganic phosphate. The polypeptide is 5-oxoprolinase subunit A (Azorhizobium caulinodans (strain ATCC 43989 / DSM 5975 / JCM 20966 / LMG 6465 / NBRC 14845 / NCIMB 13405 / ORS 571)).